Consider the following 764-residue polypeptide: 1,4-alpha-glucan branching enzyme GlgB (764 aa).

The active-site Nucleophile is aspartate 434. Glutamate 487 functions as the Proton donor in the catalytic mechanism.

This sequence belongs to the glycosyl hydrolase 13 family. GlgB subfamily. In terms of assembly, monomer.

The catalysed reaction is Transfers a segment of a (1-&gt;4)-alpha-D-glucan chain to a primary hydroxy group in a similar glucan chain.. It participates in glycan biosynthesis; glycogen biosynthesis. Catalyzes the formation of the alpha-1,6-glucosidic linkages in glycogen by scission of a 1,4-alpha-linked oligosaccharide from growing alpha-1,4-glucan chains and the subsequent attachment of the oligosaccharide to the alpha-1,6 position. The chain is 1,4-alpha-glucan branching enzyme GlgB from Trichormus variabilis (strain ATCC 29413 / PCC 7937) (Anabaena variabilis).